The following is a 274-amino-acid chain: 2-dehydro-3-deoxyphosphooctonate aldolase (274 aa).

Belongs to the KdsA family.

Its subcellular location is the cytoplasm. The enzyme catalyses D-arabinose 5-phosphate + phosphoenolpyruvate + H2O = 3-deoxy-alpha-D-manno-2-octulosonate-8-phosphate + phosphate. Its pathway is carbohydrate biosynthesis; 3-deoxy-D-manno-octulosonate biosynthesis; 3-deoxy-D-manno-octulosonate from D-ribulose 5-phosphate: step 2/3. It participates in bacterial outer membrane biogenesis; lipopolysaccharide biosynthesis. The chain is 2-dehydro-3-deoxyphosphooctonate aldolase from Legionella pneumophila (strain Lens).